The primary structure comprises 400 residues: MAKQKFERTKPHVNVGTIGHVDHGKTTSTAAITLVLSKAGGAVAQAFDQIDKAPEERERGITISTSHVEYETANRHYAHVDCPGHADYVKNMITGAAQMDGAILVVSAADGPMPQTREHILLARQVGVPYIVVWLNKADMVDDPELMELVEMEIRELLSEYEFPGDDIPIIPGSGLKALQCGCGSRDCEWCGKIWNLMDAVDSYIPTPERATDKPFLMPVEDVFTITGRGTVATGRVERGVIKVGDEIEIVGLTEAPRKTVCTGVEMFRKLLDQAQAGDNIGALLRGVDRKDIERGQVLAKTGSIKPHTKFTGEVFVLSKEEGGRHTPFFNNYRPQFYFRTTDVTGVVTLPEGTEMVMPGDRVTITCEIISPIAMEEGLRFAIREGGRTVGAGVVVSIIE.

One can recognise a tr-type G domain in the interval 10–209 (KPHVNVGTIG…AVDSYIPTPE (200 aa)). Residues 19 to 26 (GHVDHGKT) form a G1 region. Residue 19 to 26 (GHVDHGKT) participates in GTP binding. T26 contacts Mg(2+). Residues 60–64 (GITIS) are G2. Residues 81 to 84 (DCPG) form a G3 region. Residues 81 to 85 (DCPGH) and 136 to 139 (NKAD) contribute to the GTP site. Residues 136–139 (NKAD) are G4. The tract at residues 174 to 176 (SGL) is G5.

This sequence belongs to the TRAFAC class translation factor GTPase superfamily. Classic translation factor GTPase family. EF-Tu/EF-1A subfamily. As to quaternary structure, monomer.

The protein localises to the cytoplasm. It carries out the reaction GTP + H2O = GDP + phosphate + H(+). GTP hydrolase that promotes the GTP-dependent binding of aminoacyl-tRNA to the A-site of ribosomes during protein biosynthesis. This is Elongation factor Tu from Desulfitobacterium hafniense (strain DSM 10664 / DCB-2).